A 171-amino-acid polypeptide reads, in one-letter code: Phosphopantetheine adenylyltransferase (171 aa).

Substrate is bound at residue threonine 9. Residues 9–10 and histidine 17 contribute to the ATP site; that span reads TF. Residues lysine 41, leucine 73, and arginine 87 each coordinate substrate. ATP-binding positions include 88 to 90, glutamate 98, and 123 to 129; these read GLR and YQFISGT.

This sequence belongs to the bacterial CoaD family. As to quaternary structure, homohexamer. The cofactor is Mg(2+).

The protein resides in the cytoplasm. The catalysed reaction is (R)-4'-phosphopantetheine + ATP + H(+) = 3'-dephospho-CoA + diphosphate. The protein operates within cofactor biosynthesis; coenzyme A biosynthesis; CoA from (R)-pantothenate: step 4/5. In terms of biological role, reversibly transfers an adenylyl group from ATP to 4'-phosphopantetheine, yielding dephospho-CoA (dPCoA) and pyrophosphate. In Paraburkholderia xenovorans (strain LB400), this protein is Phosphopantetheine adenylyltransferase.